We begin with the raw amino-acid sequence, 354 residues long: Probable butyrate kinase 2 (354 aa).

Belongs to the acetokinase family.

The protein resides in the cytoplasm. The enzyme catalyses butanoate + ATP = butanoyl phosphate + ADP. The sequence is that of Probable butyrate kinase 2 from Caldanaerobacter subterraneus subsp. tengcongensis (strain DSM 15242 / JCM 11007 / NBRC 100824 / MB4) (Thermoanaerobacter tengcongensis).